We begin with the raw amino-acid sequence, 354 residues long: UPF0496 protein At4g34330 (354 aa).

2 consecutive transmembrane segments (helical) span residues 200-220 and 222-242; these read IIFMATFATLVICSVLAATMA and PHVAAALAAATPPVGSMGKWI. Positions 270–341 form a coiled coil; it reads AVQDLNNIKD…CSTDIRRART (72 aa).

The protein belongs to the UPF0496 family.

It localises to the membrane. The chain is UPF0496 protein At4g34330 from Arabidopsis thaliana (Mouse-ear cress).